The following is a 556-amino-acid chain: Formate--tetrahydrofolate ligase (556 aa).

ATP is bound at residue 64–71 (TPAGEGKT).

It belongs to the formate--tetrahydrofolate ligase family.

It carries out the reaction (6S)-5,6,7,8-tetrahydrofolate + formate + ATP = (6R)-10-formyltetrahydrofolate + ADP + phosphate. The protein operates within one-carbon metabolism; tetrahydrofolate interconversion. The polypeptide is Formate--tetrahydrofolate ligase (Haemophilus ducreyi (strain 35000HP / ATCC 700724)).